A 106-amino-acid polypeptide reads, in one-letter code: MTVKSQNRQTKKLAGERIAILFTQAKVFAGINPAWSDRCVERARAIAMRQRMRMEREQRRQYCHHCYAYFLHGVNVRVRVHRGHVIVTCLNCGRQTRYQVVRTDNR.

Residues Cys63, Cys66, Cys89, and Cys92 each contribute to the Zn(2+) site.

The protein belongs to the eukaryotic/archaeal RNase P protein component 4 family. Consists of a catalytic RNA component and at least 4-5 protein subunits. Requires Zn(2+) as cofactor.

It localises to the cytoplasm. It catalyses the reaction Endonucleolytic cleavage of RNA, removing 5'-extranucleotides from tRNA precursor.. Part of ribonuclease P, a protein complex that generates mature tRNA molecules by cleaving their 5'-ends. The sequence is that of Ribonuclease P protein component 4 from Methanosphaerula palustris (strain ATCC BAA-1556 / DSM 19958 / E1-9c).